The following is a 326-amino-acid chain: Beta-ketoacyl-[acyl-carrier-protein] synthase III (326 aa).

Catalysis depends on residues Cys111 and His253. Positions Gln254–Arg258 are ACP-binding. Asn283 is a catalytic residue.

The protein belongs to the thiolase-like superfamily. FabH family. In terms of assembly, homodimer.

It is found in the cytoplasm. The enzyme catalyses malonyl-[ACP] + acetyl-CoA + H(+) = 3-oxobutanoyl-[ACP] + CO2 + CoA. It functions in the pathway lipid metabolism; fatty acid biosynthesis. In terms of biological role, catalyzes the condensation reaction of fatty acid synthesis by the addition to an acyl acceptor of two carbons from malonyl-ACP. Catalyzes the first condensation reaction which initiates fatty acid synthesis and may therefore play a role in governing the total rate of fatty acid production. Possesses both acetoacetyl-ACP synthase and acetyl transacylase activities. Its substrate specificity determines the biosynthesis of branched-chain and/or straight-chain of fatty acids. This chain is Beta-ketoacyl-[acyl-carrier-protein] synthase III, found in Latilactobacillus sakei subsp. sakei (strain 23K) (Lactobacillus sakei subsp. sakei).